The following is a 311-amino-acid chain: MSLPDVQSTAPDVRISLTRVGVKNVRKLVEVGRPGKTRPAIFISEFDVFVDLPSSLKGANLSRNFEVIDEVLQQATSGDVKGIEDVCGIVSRKLLDHHEYADRTEVFMRSFYMMNRETPVSKTSCQEVINVYAHAVAQRTNGKPMVRKSVGAEVTGITACPCAQNIMKDHAMHVMEQLEIPEDKISAFFNEIPMASHNQRGRGFLCVETDGDIIVPLEKIVTVLKESMSAKIYELLKRGDESYVVMAAHKNARFVEDCVREMARRVVSTFGDLPGDTHITIRQTNEESIHQHDAYAERKATLAELRDELSI.

The protein belongs to the GTP cyclohydrolase IV family. Homodimer. It depends on Fe(2+) as a cofactor.

The catalysed reaction is GTP + H2O = 7,8-dihydroneopterin 2',3'-cyclic phosphate + formate + diphosphate + H(+). The protein operates within cofactor biosynthesis; 5,6,7,8-tetrahydromethanopterin biosynthesis. Converts GTP to 7,8-dihydro-D-neopterin 2',3'-cyclic phosphate, the first intermediate in the biosynthesis of coenzyme methanopterin. In Methanocorpusculum labreanum (strain ATCC 43576 / DSM 4855 / Z), this protein is GTP cyclohydrolase MptA.